Here is a 337-residue protein sequence, read N- to C-terminus: Dimethyladenosine transferase 1, mitochondrial (337 aa).

The transit peptide at 1–84 directs the protein to the mitochondrion; the sequence is MSQVTARVLN…RSILRRQPQR (84 aa). S-adenosyl-L-methionine is bound by residues 38–41, asparagine 39, leucine 41, glycine 67, glutamate 89, aspartate 118, and asparagine 140; that span reads QNFL.

It belongs to the class I-like SAM-binding methyltransferase superfamily. rRNA adenine N(6)-methyltransferase family. KsgA subfamily.

The protein localises to the mitochondrion. In terms of biological role, probable S-adenosyl-L-methionine-dependent methyltransferase which specifically dimethylates mitochondrial 12S rRNA at the conserved stem loop. The polypeptide is Dimethyladenosine transferase 1, mitochondrial (mtTFB1) (Drosophila pseudoobscura pseudoobscura (Fruit fly)).